The primary structure comprises 270 residues: Chlorophyll a-b binding protein, chloroplastic (270 aa).

Residues 1–41 (MASACASSTIAAVAFSSPSSQKNGSIVGATKASFLGGKRLR) constitute a chloroplast transit peptide. Tryptophan 68 is a chlorophyll b binding site. Residues phenylalanine 88, glutamate 107, and histidine 110 each contribute to the chlorophyll a site. Arginine 112 is a chlorophyll b binding site. Residues 113 to 133 (WAMLGAAGIFIPEFLTKIGVL) form a helical membrane-spanning segment. Residue glutamine 144 coordinates chlorophyll a. Residues 146-166 (YFTDTTTLFVIELVLIGWAEG) traverse the membrane as a helical segment. Chlorophyll b-binding residues include valine 155, glutamate 165, and arginine 168. Positions 221, 222, 225, 227, 239, and 254 each coordinate chlorophyll a. Residues 228 to 248 (LAMLAVMGAWFQHIYTGTGPI) form a helical membrane-spanning segment.

Belongs to the light-harvesting chlorophyll a/b-binding (LHC) protein family. As to quaternary structure, the LHC complex consists of chlorophyll a-b binding proteins. It depends on Binds at least 14 chlorophylls (8 Chl-a and 6 Chl-b) and carotenoids such as lutein and neoxanthin. as a cofactor. Photoregulated by reversible phosphorylation of its threonine residues.

It is found in the plastid. Its subcellular location is the chloroplast thylakoid membrane. The light-harvesting complex (LHC) functions as a light receptor, it captures and delivers excitation energy to photosystems with which it is closely associated. The chain is Chlorophyll a-b binding protein, chloroplastic from Petunia hybrida (Petunia).